Reading from the N-terminus, the 31-residue chain is Maltose/maltodextrin import ATP-binding protein MalK (31 aa).

It belongs to the ABC transporter superfamily. Maltooligosaccharide importer (TC 3.A.1.1.1) family. In terms of assembly, the complex is composed of two ATP-binding proteins (MalK), two transmembrane proteins (MalG and MalK) and a solute-binding protein (MalE).

It localises to the cell inner membrane. It carries out the reaction D-maltose(out) + ATP + H2O = D-maltose(in) + ADP + phosphate + H(+). Functionally, part of the ABC transporter complex MalEFGK involved in maltose/maltodextrin import. Responsible for energy coupling to the transport system. The sequence is that of Maltose/maltodextrin import ATP-binding protein MalK from Photorhabdus luminescens (Xenorhabdus luminescens).